We begin with the raw amino-acid sequence, 264 residues long: Acyl-[acyl-carrier-protein]--UDP-N-acetylglucosamine O-acyltransferase (264 aa).

It belongs to the transferase hexapeptide repeat family. LpxA subfamily. In terms of assembly, homotrimer.

It is found in the cytoplasm. The catalysed reaction is a (3R)-hydroxyacyl-[ACP] + UDP-N-acetyl-alpha-D-glucosamine = a UDP-3-O-[(3R)-3-hydroxyacyl]-N-acetyl-alpha-D-glucosamine + holo-[ACP]. It participates in glycolipid biosynthesis; lipid IV(A) biosynthesis; lipid IV(A) from (3R)-3-hydroxytetradecanoyl-[acyl-carrier-protein] and UDP-N-acetyl-alpha-D-glucosamine: step 1/6. Its function is as follows. Involved in the biosynthesis of lipid A, a phosphorylated glycolipid that anchors the lipopolysaccharide to the outer membrane of the cell. This chain is Acyl-[acyl-carrier-protein]--UDP-N-acetylglucosamine O-acyltransferase, found in Rickettsia peacockii (strain Rustic).